Here is a 177-residue protein sequence, read N- to C-terminus: ATP synthase subunit delta (177 aa).

Belongs to the ATPase delta chain family. F-type ATPases have 2 components, F(1) - the catalytic core - and F(0) - the membrane proton channel. F(1) has five subunits: alpha(3), beta(3), gamma(1), delta(1), epsilon(1). F(0) has three main subunits: a(1), b(2) and c(10-14). The alpha and beta chains form an alternating ring which encloses part of the gamma chain. F(1) is attached to F(0) by a central stalk formed by the gamma and epsilon chains, while a peripheral stalk is formed by the delta and b chains.

It is found in the cell inner membrane. Functionally, f(1)F(0) ATP synthase produces ATP from ADP in the presence of a proton or sodium gradient. F-type ATPases consist of two structural domains, F(1) containing the extramembraneous catalytic core and F(0) containing the membrane proton channel, linked together by a central stalk and a peripheral stalk. During catalysis, ATP synthesis in the catalytic domain of F(1) is coupled via a rotary mechanism of the central stalk subunits to proton translocation. In terms of biological role, this protein is part of the stalk that links CF(0) to CF(1). It either transmits conformational changes from CF(0) to CF(1) or is implicated in proton conduction. The chain is ATP synthase subunit delta from Edwardsiella ictaluri (strain 93-146).